An 85-amino-acid polypeptide reads, in one-letter code: MSAKGQMLQDPFLNILRKEHVPVSIYLVNGIKLQGQIESFDQYVVLLKNTVTQMVYKHAISTVVPARPVQVPHEHPAPAAGTAEI.

One can recognise a Sm domain in the interval 10-69; that stretch reads DPFLNILRKEHVPVSIYLVNGIKLQGQIESFDQYVVLLKNTVTQMVYKHAISTVVPARPV.

This sequence belongs to the Hfq family. In terms of assembly, homohexamer.

Its function is as follows. RNA chaperone that binds small regulatory RNA (sRNAs) and mRNAs to facilitate mRNA translational regulation in response to envelope stress, environmental stress and changes in metabolite concentrations. Also binds with high specificity to tRNAs. This is RNA-binding protein Hfq from Laribacter hongkongensis (strain HLHK9).